A 172-amino-acid chain; its full sequence is Large ribosomal subunit protein uL10 (172 aa).

It belongs to the universal ribosomal protein uL10 family. As to quaternary structure, part of the ribosomal stalk of the 50S ribosomal subunit. The N-terminus interacts with L11 and the large rRNA to form the base of the stalk. The C-terminus forms an elongated spine to which L12 dimers bind in a sequential fashion forming a multimeric L10(L12)X complex.

Functionally, forms part of the ribosomal stalk, playing a central role in the interaction of the ribosome with GTP-bound translation factors. The chain is Large ribosomal subunit protein uL10 from Brucella abortus (strain S19).